The chain runs to 137 residues: Large ribosomal subunit protein uL16 (137 aa).

It belongs to the universal ribosomal protein uL16 family. As to quaternary structure, part of the 50S ribosomal subunit.

In terms of biological role, binds 23S rRNA and is also seen to make contacts with the A and possibly P site tRNAs. The sequence is that of Large ribosomal subunit protein uL16 from Tolumonas auensis (strain DSM 9187 / NBRC 110442 / TA 4).